Here is a 218-residue protein sequence, read N- to C-terminus: uncharacterized protein (218 aa).

Polar residues-rich tracts occupy residues 1–21 and 68–102; these read MSSQQQESEASGYNTSASSEF and LNTSNDSNLVRNTARSPDSSMNGRPQTRRSTSSDI. Disordered regions lie at residues 1–39, 63–116, and 170–205; these read MSSQQQESEASGYNTSASSEFGSLEDSHQFVSPVTRHAS, EKRL…STSG, and GAKRKMATPSQSLKRQEKQSPLESRHGGLRSRGTPQ. The span at 183–195 shows a compositional bias: basic and acidic residues; the sequence is KRQEKQSPLESRH.

This is an uncharacterized protein from Caenorhabditis elegans.